A 194-amino-acid polypeptide reads, in one-letter code: Adenylate kinase (194 aa).

Residue 11 to 16 (GSGKGT) participates in ATP binding. An NMP region spans residues 31-60 (STGELLRAEIKAQTELGQAAAGYINEGHLV). Residues T32, R37, 58–60 (HLV), 86–89 (GFPR), and Q93 contribute to the AMP site. The LID stretch occupies residues 127 to 137 (NRGKISGRSDD). Residue R128 coordinates ATP. AMP contacts are provided by R134 and R145. An ATP-binding site is contributed by G173.

The protein belongs to the adenylate kinase family. As to quaternary structure, monomer.

The protein resides in the cytoplasm. It catalyses the reaction AMP + ATP = 2 ADP. It functions in the pathway purine metabolism; AMP biosynthesis via salvage pathway; AMP from ADP: step 1/1. Catalyzes the reversible transfer of the terminal phosphate group between ATP and AMP. Plays an important role in cellular energy homeostasis and in adenine nucleotide metabolism. The sequence is that of Adenylate kinase from Porphyromonas gingivalis (strain ATCC 33277 / DSM 20709 / CIP 103683 / JCM 12257 / NCTC 11834 / 2561).